Reading from the N-terminus, the 569-residue chain is RNA demethylase ALKBH10B (569 aa).

The stretch at 118–151 (QKVAAKKAEDLKQKKTEEEAEEDLKEVVATEEEE) forms a coiled coil. The tract at residues 164 to 190 (ENDVNGDVEDVEDDSPTSDITDSGSHQ) is disordered. Residues 167–179 (VNGDVEDVEDDSP) show a composition bias toward acidic residues. Residues 180-189 (TSDITDSGSH) are compositionally biased toward polar residues. Fe cation contacts are provided by His366, Glu368, and His421. Position 430 (Arg430) interacts with 2-oxoglutarate. The segment covering 531–545 (KHVKHLPPRAQKKRL) has biased composition (basic residues). The tract at residues 531–569 (KHVKHLPPRAQKKRLLPLPPAASSSPAGGSTSEPVITVG) is disordered. Residues 551-560 (AASSSPAGGS) show a composition bias toward low complexity.

This sequence belongs to the alkB family. Requires Fe(2+) as cofactor.

It catalyses the reaction an N(6)-methyladenosine in mRNA + 2-oxoglutarate + O2 = an adenosine in mRNA + formaldehyde + succinate + CO2. Its function is as follows. Dioxygenase that demethylates RNA by oxidative demethylation: specifically demethylates N(6)-methyladenosine (m6A) RNA, the most prevalent internal modification of messenger RNA (mRNA) in higher eukaryotes. ALKBH10B-mediated mRNA m6A demethylation stabilizes the mRNA of the key flowering time regulators FT, SPL3 and SPL9, which are involved in the control of floral transition. The polypeptide is RNA demethylase ALKBH10B (Arabidopsis thaliana (Mouse-ear cress)).